A 264-amino-acid polypeptide reads, in one-letter code: Elongation factor Ts (264 aa).

The interval 76–79 (TDFV) is involved in Mg(2+) ion dislocation from EF-Tu.

Belongs to the EF-Ts family.

The protein localises to the cytoplasm. In terms of biological role, associates with the EF-Tu.GDP complex and induces the exchange of GDP to GTP. It remains bound to the aminoacyl-tRNA.EF-Tu.GTP complex up to the GTP hydrolysis stage on the ribosome. This chain is Elongation factor Ts, found in Deinococcus radiodurans (strain ATCC 13939 / DSM 20539 / JCM 16871 / CCUG 27074 / LMG 4051 / NBRC 15346 / NCIMB 9279 / VKM B-1422 / R1).